A 285-amino-acid chain; its full sequence is Putative pyruvate, phosphate dikinase regulatory protein (285 aa).

165–172 (GVSRTSKT) contributes to the ADP binding site.

The protein belongs to the pyruvate, phosphate/water dikinase regulatory protein family. PDRP subfamily.

The enzyme catalyses N(tele)-phospho-L-histidyl/L-threonyl-[pyruvate, phosphate dikinase] + ADP = N(tele)-phospho-L-histidyl/O-phospho-L-threonyl-[pyruvate, phosphate dikinase] + AMP + H(+). The catalysed reaction is N(tele)-phospho-L-histidyl/O-phospho-L-threonyl-[pyruvate, phosphate dikinase] + phosphate + H(+) = N(tele)-phospho-L-histidyl/L-threonyl-[pyruvate, phosphate dikinase] + diphosphate. Functionally, bifunctional serine/threonine kinase and phosphorylase involved in the regulation of the pyruvate, phosphate dikinase (PPDK) by catalyzing its phosphorylation/dephosphorylation. The chain is Putative pyruvate, phosphate dikinase regulatory protein from Lactobacillus delbrueckii subsp. bulgaricus (strain ATCC 11842 / DSM 20081 / BCRC 10696 / JCM 1002 / NBRC 13953 / NCIMB 11778 / NCTC 12712 / WDCM 00102 / Lb 14).